Consider the following 404-residue polypeptide: Pyrophosphate--fructose 6-phosphate 1-phosphotransferase (404 aa).

Residue Gly-13 participates in diphosphate binding. Asn-108 contacts Mg(2+). Substrate-binding positions include 136–138 (TID), 180–182 (MGR), Glu-237, and 295–298 (YLQR). Asp-138 serves as the catalytic Proton acceptor.

The protein belongs to the phosphofructokinase type A (PFKA) family. PPi-dependent PFK group II subfamily. Clade 'B2' sub-subfamily. As to quaternary structure, homodimer. Requires Mg(2+) as cofactor.

It localises to the cytoplasm. The catalysed reaction is beta-D-fructose 6-phosphate + diphosphate = beta-D-fructose 1,6-bisphosphate + phosphate + H(+). It participates in carbohydrate degradation; glycolysis; D-glyceraldehyde 3-phosphate and glycerone phosphate from D-glucose: step 3/4. Non-allosteric. In terms of biological role, catalyzes the phosphorylation of D-fructose 6-phosphate, the first committing step of glycolysis. Uses inorganic phosphate (PPi) as phosphoryl donor instead of ATP like common ATP-dependent phosphofructokinases (ATP-PFKs), which renders the reaction reversible, and can thus function both in glycolysis and gluconeogenesis. Consistently, PPi-PFK can replace the enzymes of both the forward (ATP-PFK) and reverse (fructose-bisphosphatase (FBPase)) reactions. In Rhodospirillum rubrum (strain ATCC 11170 / ATH 1.1.1 / DSM 467 / LMG 4362 / NCIMB 8255 / S1), this protein is Pyrophosphate--fructose 6-phosphate 1-phosphotransferase.